The sequence spans 177 residues: O-acetyl-ADP-ribose deacetylase (177 aa).

The Macro domain occupies 1–175; sequence MKTRIHVVQG…LYERLLTQQG (175 aa). Residues 11–12, Asn25, 33–35, and 122–126 contribute to the substrate site; these read DI, GVD, and STGVY. The active-site Proton acceptor is Asp35.

It belongs to the MacroD-type family. YmdB subfamily. Homodimer. Interacts with RNase III.

It carries out the reaction 3''-O-acetyl-ADP-D-ribose + H2O = ADP-D-ribose + acetate + H(+). It catalyses the reaction 2''-O-acetyl-ADP-D-ribose + H2O = ADP-D-ribose + acetate + H(+). In terms of biological role, deacetylates O-acetyl-ADP ribose to yield ADP-ribose and free acetate. Down-regulates ribonuclease 3 (RNase III) activity. Acts by interacting directly with the region of the ribonuclease that is required for dimerization/activation. The sequence is that of O-acetyl-ADP-ribose deacetylase from Escherichia coli O157:H7.